Consider the following 134-residue polypeptide: DNA-binding protein H-NS, plasmid (134 aa).

Residues 23-67 (LEILEELLEKLSVVVEERRQEESSKEAELKARLEKIESLRQLMLE) are a coiled coil. Residues 77 to 96 (SSFSAKSGAPKKVREPRPAK) are disordered. A DNA-binding region spans residues 112–117 (QGRTPK).

This sequence belongs to the histone-like protein H-NS family. As to quaternary structure, homodimer that oligomerizes on DNA into higher-order complexes that form bridges between disparate regions of DNA compacting it. Interacts with Hha, YdgT and StpA.

The protein localises to the cytoplasm. The protein resides in the nucleoid. A DNA-binding protein implicated in transcriptional repression and chromosome organization and compaction. Binds DNA, modifying gene expression, especially non-core genes. Does not regulate the same set of genes as its chromosomal counterpart (tested in S.typhimurium strain SL1344 / SV5015, chromosomal H-NS protein is AC A0A0H3NBY9). Thus it has a not-completely overlapping set of gene targets compared to its chromosomal homolog; many of these target genes are either plasmid-encoded or acquired by horizontally transferred genes (HTG). This protein can function in the absence of H-NS-modulating protein Hha (either chromosomal or plasmid-encoded), although many HTG genes are regulated by an H-NS/Hha complex. Binds nucleation sites in AT-rich DNA and bridges them, forming higher-order nucleoprotein complexes and condensing the chromosome. A subset of genes are repressed by H-NS in association with Hha and/or Cnu (ydgT). The chain is DNA-binding protein H-NS, plasmid (hns) from Salmonella typhi.